We begin with the raw amino-acid sequence, 132 residues long: MDVTRLLLATLLVFLCFFTACSHPPPGEKLRDDRSLRSNSSVNLLDFPSVSIVALNKNSKQISRKEAEKKRSSKKEASMKKVARPRTPLSAPCVATRDSCKPPAPACCDPCASCQCRFFRSACSCRVLSLNC.

An N-terminal signal peptide occupies residues 1–22; that stretch reads MDVTRLLLATLLVFLCFFTACS. The N-linked (GlcNAc...) asparagine glycan is linked to N39. The disordered stretch occupies residues 61–87; the sequence is QISRKEAEKKRSSKKEASMKKVARPRT. A compositionally biased stretch (basic and acidic residues) spans 63 to 79; sequence SRKEAEKKRSSKKEASM. Intrachain disulfides connect C93-C108, C100-C114, C107-C125, C111-C132, and C116-C123. An Agouti domain is found at 93–132; that stretch reads CVATRDSCKPPAPACCDPCASCQCRFFRSACSCRVLSLNC.

The protein localises to the secreted. Involved in the regulation of melanogenesis. The binding of ASP to MC1R precludes alpha-MSH initiated signaling and thus blocks production of cAMP, leading to a down-regulation of eumelanogenesis (brown/black pigment) and thus increasing synthesis of pheomelanin (yellow/red pigment). The chain is Agouti-signaling protein (ASIP) from Macaca nigrescens (Gorontalo macaque).